We begin with the raw amino-acid sequence, 463 residues long: POU domain, class 2, transcription factor 2 (463 aa).

Disordered stretches follow at residues 1–87, 159–182, 259–282, 341–376, and 393–463; these read MVHS…QPHL, QPRA…EEPS, SSLP…GRRR, PCSA…LSQA, and TLHP…PYQP. Residues 12–37 show a composition bias toward basic and acidic residues; sequence RMSKPLEAEKQSLDSPSEHTDTERNG. Over residues 41–60 the composition is skewed to polar residues; that stretch reads NHQNPQNKASPFSVSPTGPS. Residues 75–85 are compositionally biased toward pro residues; it reads AAPPPPQPAQP. The region spanning 179–253 is the POU-specific domain; the sequence is EEPSDLEELE…LLEKWLNDAE (75 aa). Over residues 259–272 the composition is skewed to low complexity; that stretch reads SSLPSPNQLSSPSL. Residues 281-340 constitute a DNA-binding region (homeobox); sequence RRKKRTSIETNVRFALEKSFLANQKPTSEEILLIAEQLHMEKEVIRVWFCNRRQKEKRIN. The segment at 373–394 is leucine-zipper; it reads LSQASSSLSTTVTTLSSAVGTL. A compositionally biased stretch (gly residues) spans 400 to 409; it reads AGGGGGGGGA.

Belongs to the POU transcription factor family. Class-2 subfamily. As to quaternary structure, interacts with NR3C1, AR and PGR. Interacts with POU2AF1; the interaction increases POU2F2 transactivation activity. In terms of tissue distribution, highest in B cells, but also present in brain (neuronal and glial cells), intestine, kidney, and testes. As to expression, expressed at higher levels in B-cells than in neuronal cells. Expressed in neuronal cell lines and brain, but not dorsal root ganglia. In terms of tissue distribution, expressed at lower levels in neuronal cells than in B cells. As to expression, expressed in neuronal cell lines, and at lower levels in neuroblastoma and dorsal root ganglia. Widely expressed in the developing nervous system but expression is confined to very specific regions in the adult brain, it is expressed at a lower level in B cells. In terms of tissue distribution, either absent in, or expressed at very low levels in neuronal cells and brain. As to expression, expressed in all tissues tested: mammary gland, liver, spleen, lung, kidney intestine, uterus and ovary of a virgin mouse. Levels of isoform OCT2.7 are highest in spleen and lung. In mammary gland, expression is localized to the alveolus epithelial cells.

The protein localises to the cytoplasm. It is found in the nucleus. Its activity is regulated as follows. Transactivation activity is enhanced by transcriptional coactivator POU2AF1. Transcription factor that specifically binds to the octamer motif (5'-ATTTGCAT-3'). Regulates IL6 expression in B cells with POU2AF1. Regulates transcription in a number of tissues in addition to activating immunoglobulin gene expression. Modulates transcription transactivation by NR3C1, AR and PGR. Functionally, activates octamer-containing promoters. Its function is as follows. Represses some promoters and activate others. In terms of biological role, represses some promoters and activate others. Activates the U2 small nuclear RNA (snRNA) promoter. Unable to bind to the octamer motif, but can still activate the beta-casein gene promoter at low levels. This is POU domain, class 2, transcription factor 2 from Mus musculus (Mouse).